Here is an 82-residue protein sequence, read N- to C-terminus: Small ribosomal subunit protein bS18 (82 aa).

Positions M1–T25 are disordered.

The protein belongs to the bacterial ribosomal protein bS18 family. As to quaternary structure, part of the 30S ribosomal subunit. Forms a tight heterodimer with protein bS6.

Binds as a heterodimer with protein bS6 to the central domain of the 16S rRNA, where it helps stabilize the platform of the 30S subunit. The sequence is that of Small ribosomal subunit protein bS18 from Bartonella henselae (strain ATCC 49882 / DSM 28221 / CCUG 30454 / Houston 1) (Rochalimaea henselae).